The following is a 340-amino-acid chain: Sterol-4-alpha-carboxylate 3-dehydrogenase erg26, decarboxylating (340 aa).

Catalysis depends on Tyr-144, which acts as the Proton acceptor. Lys-148 contacts NAD(+).

It belongs to the 3-beta-HSD family. As to quaternary structure, heterotetramer of erg25, erg26, erg27 and erg28. Erg28 acts as a scaffold to tether erg27 and other 4,4-demethylation-related enzymes, forming a demethylation enzyme complex, in the endoplasmic reticulum.

It is found in the endoplasmic reticulum membrane. The enzyme catalyses 4beta-methylzymosterol-4alpha-carboxylate + NADP(+) = 3-dehydro-4-methylzymosterol + CO2 + NADPH. Its pathway is steroid biosynthesis; zymosterol biosynthesis; zymosterol from lanosterol: step 4/6. It participates in steroid metabolism; ergosterol biosynthesis. Functionally, sterol-4-alpha-carboxylate 3-dehydrogenase; part of the third module of ergosterol biosynthesis pathway that includes by the late steps of the pathway. Erg26 is a catalytic component of the C-4 demethylation complex that catalyzes the oxidative decarboxylation that results in a reduction of the 3-beta-hydroxy group at the C-3 carbon to an oxo group. The third module or late pathway involves the ergosterol synthesis itself through consecutive reactions that mainly occur in the endoplasmic reticulum (ER) membrane. Firstly, the squalene synthase erg9 catalyzes the condensation of 2 farnesyl pyrophosphate moieties to form squalene, which is the precursor of all steroids. Secondly, squalene is converted into lanosterol by the consecutive action of the squalene epoxidase erg1 and the lanosterol synthase erg7. The lanosterol 14-alpha-demethylase erg11/cyp1 catalyzes C14-demethylation of lanosterol to produce 4,4'-dimethyl cholesta-8,14,24-triene-3-beta-ol. In the next steps, a complex process involving various demethylation, reduction and desaturation reactions catalyzed by the C-14 reductase erg24 and the C-4 demethylation complex erg25-erg26-erg27 leads to the production of zymosterol. Erg28 likely functions in the C-4 demethylation complex reaction by tethering erg26 and Erg27 to the endoplasmic reticulum or to facilitate interaction between these proteins. Then, the sterol 24-C-methyltransferase erg6 catalyzes the methyl transfer from S-adenosyl-methionine to the C-24 of zymosterol to form fecosterol. The C-8 sterol isomerase erg2 catalyzes the reaction which results in unsaturation at C-7 in the B ring of sterols and thus converts fecosterol to episterol. The sterol-C5-desaturases erg31 and erg32 then catalyze the introduction of a C-5 double bond in the B ring to produce 5-dehydroepisterol. The C-22 sterol desaturase erg5 further converts 5-dehydroepisterol into ergosta-5,7,22,24(28)-tetraen-3beta-ol by forming the C-22(23) double bond in the sterol side chain. Finally, ergosta-5,7,22,24(28)-tetraen-3beta-ol is substrate of the C-24(28) sterol reductase erg4 to produce ergosterol. In the genus Schizosaccharomyces, a second route exists between lanosterol and fecosterol, via the methylation of lanosterol to eburicol by erg6, followed by C14-demethylation by erg11/cyp1 and C4-demethylation by the demethylation complex erg25-erg26-erg27. The chain is Sterol-4-alpha-carboxylate 3-dehydrogenase erg26, decarboxylating from Schizosaccharomyces pombe (strain 972 / ATCC 24843) (Fission yeast).